The primary structure comprises 193 residues: Ion-translocating oxidoreductase complex subunit A (193 aa).

The next 6 helical transmembrane spans lie at 5–25, 39–59, 63–83, 102–122, 134–154, and 171–191; these read LLLFVGTVLVNNFVLVKFLGL, MGMGLATTFVMTLASICAWLI, ILIPLNLIYLRTLAFILVIAV, LLGIFLPLITTNCAVLGVALL, ALYGFSAAVGFSLVMVLFAAI, and AIALITAGLMSLAFMGFSGLV.

The protein belongs to the NqrDE/RnfAE family. As to quaternary structure, the complex is composed of six subunits: RsxA, RsxB, RsxC, RsxD, RsxE and RsxG.

It localises to the cell inner membrane. In terms of biological role, part of a membrane-bound complex that couples electron transfer with translocation of ions across the membrane. Required to maintain the reduced state of SoxR. The sequence is that of Ion-translocating oxidoreductase complex subunit A from Escherichia fergusonii (strain ATCC 35469 / DSM 13698 / CCUG 18766 / IAM 14443 / JCM 21226 / LMG 7866 / NBRC 102419 / NCTC 12128 / CDC 0568-73).